The primary structure comprises 156 residues: MLQSQFAQAPRLALADTIIDAKARKNLSWQDLTDGTGLSLAFVTAALLGQHALPATAADLVCDKLGLDQDASRLLQSIPLRGSIAGGIPTDPTVYRFYEMLQVYGSTLKALVHEQFGDGIISAINFKLDIKKVEDPEGGSRAVITLDGKYLPTKPF.

Residues Arg-96, Glu-99, and Ser-122 contribute to the active site.

Belongs to the cyanase family.

It catalyses the reaction cyanate + hydrogencarbonate + 3 H(+) = NH4(+) + 2 CO2. Functionally, catalyzes the reaction of cyanate with bicarbonate to produce ammonia and carbon dioxide. The sequence is that of Cyanate hydratase from Pseudomonas fluorescens (strain ATCC BAA-477 / NRRL B-23932 / Pf-5).